Here is a 1154-residue protein sequence, read N- to C-terminus: MGLLLMILASAVLGSFLTLLAQFFLLYRRQPEPPADEAARAGEGFRYIKPVPGLLLREYLYGGGRDEEPSGAAPEGGATPTAAPETPAPPTRETCYFLNATILFLFRELRDTALTRRWVTKKIKVEFEELLQTKTAGRLLEGLSLRDVFLGETVPFIKTIRLVRPVVPSATGEPDGPEGEALPAACPEELAFEAEVEYNGGFHLAIDVDLVFGKSAYLFVKLSRVVGRLRLVFTRVPFTHWFFSFVEDPLIDFEVRSQFEGRPMPQLTSIIVNQLKKIIKRKHTLPNYKIRFKPFFPYQTLQGFEEDEEHIHIQQWALTEGRLKVTLLECSRLLIFGSYDREANVHCTLELSSSVWEEKQRSSIKTVELIKGNLQSVGLTLRLVQSTDGYAGHVIIETVAPNSPAAIADLQRGDRLIAIGGVKITSTLQVLKLIKQAGDRVLVYYERPVGQSNQGAVLQDNFGQLEENFLSSSCQSGYEEEAAGLTVDTESRELDSEFEDLASDVRAQNEFKDEAQSLSHSPKRVPTTLSIKPLGAISPVLNRKLAVGSHPLPPKIQSKDGNKPPPLKTSEITDPAQVSKPTQGSAFKPPVPPRPQAKVPLPSADAPNQAEPDVLVEKPEKVVPPPLVDKSAEKQAKNVDAIDDAAAPKQFLAKQEVAKDVTSETSCPTKDSSDDRQTWESSEILYRNKLGKWTRTRASCLFDIEACHRYLNIALWCRDPFKLGGLICLGHVSLKLEDVALGCLATSNTEYLSKLRLEAPSPKAIVTRTALRNLSMQKGFNDKFCYGDITIHFKYLKEGESDHHVVTNVEKEKEPHLVEEVSVLPKEEQFVGQMGLTENKHSFQDTQFQNPTWCDYCKKKVWTKAASQCMFCAYVCHKKCQEKCLAETSVCGATDRRIDRTLKNLRLEGQETLLGLPPRVDAEASKSVNKTTGLTRHIINTSSRLLNLRQVSKTRLSEPGTDLVEPSPKHTPNTSDNEGSDTEVCGPNSPSKRGNSTGIKLVRKEGGLDDSVFIAVKEIGRDLYRGLPTEERIQKLEFMLDKLQNEIDQELEHNNSLVREEKETTDTRKKSLLSAALAKSGERLQALTLLMIHYRAGIEDIETLESLSLDQHSKKISKYTDDTEEDLDNEISQLIDSQPFSSISDDLFGPSESV.

Residues 2 to 24 traverse the membrane as a helical segment; the sequence is GLLLMILASAVLGSFLTLLAQFF. The disordered stretch occupies residues 66 to 90; sequence DEEPSGAAPEGGATPTAAPETPAPP. Over residues 70–85 the composition is skewed to low complexity; the sequence is SGAAPEGGATPTAAPE. In terms of domain architecture, SMP-LTD spans 91 to 294; sequence TRETCYFLNA…LPNYKIRFKP (204 aa). Residues 366-449 form the PDZ domain; it reads TVELIKGNLQ…RVLVYYERPV (84 aa). Phosphoserine occurs at positions 496, 521, and 538. The tract at residues 548-612 is disordered; it reads GSHPLPPKIQ…SADAPNQAEP (65 aa). A Phorbol-ester/DAG-type zinc finger spans residues 840 to 891; it reads KHSFQDTQFQNPTWCDYCKKKVWTKAASQCMFCAYVCHKKCQEKCLAETSVC. The segment at 955 to 999 is disordered; it reads RLSEPGTDLVEPSPKHTPNTSDNEGSDTEVCGPNSPSKRGNSTGI. A phosphoserine mark is found at serine 967 and serine 980. Over residues 988 to 998 the composition is skewed to polar residues; it reads NSPSKRGNSTG. Positions 1028-1063 form a coiled coil; that stretch reads PTEERIQKLEFMLDKLQNEIDQELEHNNSLVREEKE. Positions 1132–1144 are enriched in polar residues; it reads SQLIDSQPFSSIS. The tract at residues 1132-1154 is disordered; it reads SQLIDSQPFSSISDDLFGPSESV.

Interacts with MSN. As to quaternary structure, (Microbial infection) Interacts with HIV-1 Gag polyprotein p55.

The protein resides in the endoplasmic reticulum membrane. In terms of biological role, molecular tethering protein that connects endoplasmic reticulum and mitochondria membranes. PDZD8-dependent endoplasmic reticulum-mitochondria membrane tethering is essential for endoplasmic reticulum-mitochondria Ca(2+) transfer. In neurons, involved in the regulation of dendritic Ca(2+) dynamics by regulating mitochondrial Ca(2+) uptake in neurons. Plays an indirect role in the regulation of cell morphology and cytoskeletal organization. May inhibit herpes simplex virus 1 infection at an early stage. In Homo sapiens (Human), this protein is PDZ domain-containing protein 8.